The sequence spans 84 residues: Exodeoxyribonuclease 7 small subunit (84 aa).

It belongs to the XseB family. In terms of assembly, heterooligomer composed of large and small subunits.

Its subcellular location is the cytoplasm. It carries out the reaction Exonucleolytic cleavage in either 5'- to 3'- or 3'- to 5'-direction to yield nucleoside 5'-phosphates.. Its function is as follows. Bidirectionally degrades single-stranded DNA into large acid-insoluble oligonucleotides, which are then degraded further into small acid-soluble oligonucleotides. The chain is Exodeoxyribonuclease 7 small subunit from Bartonella quintana (strain Toulouse) (Rochalimaea quintana).